A 305-amino-acid chain; its full sequence is tRNA uridine(34) hydroxylase (305 aa).

Residues 125–219 (ADENTVVVDT…YLEEVPREDS (95 aa)) form the Rhodanese domain. The active-site Cysteine persulfide intermediate is the cysteine 179.

The protein belongs to the TrhO family.

It carries out the reaction uridine(34) in tRNA + AH2 + O2 = 5-hydroxyuridine(34) in tRNA + A + H2O. Functionally, catalyzes oxygen-dependent 5-hydroxyuridine (ho5U) modification at position 34 in tRNAs. The sequence is that of tRNA uridine(34) hydroxylase from Brucella anthropi (strain ATCC 49188 / DSM 6882 / CCUG 24695 / JCM 21032 / LMG 3331 / NBRC 15819 / NCTC 12168 / Alc 37) (Ochrobactrum anthropi).